We begin with the raw amino-acid sequence, 309 residues long: Taste receptor type 2 member 43 (309 aa).

Residue M1 is a topological domain, extracellular. Residues 2 to 22 (ITFLPIIFSSLVVVTFVIGNF) form a helical membrane-spanning segment. Residues 23-46 (ANGFIALVNSIEWFKRQKISFADQ) lie on the Cytoplasmic side of the membrane. Residues 47–67 (ILTALAVSRVGLLWVLLLNWY) form a helical membrane-spanning segment. The Extracellular portion of the chain corresponds to 68 to 86 (STVLNPAFNSVEVRTTAYN). A helical membrane pass occupies residues 87–107 (IWAVINHFSNWLATTLSIFYL). Residues 108 to 126 (LKIANFSNFIFLHLKRRVK) are Cytoplasmic-facing. Residues 127-147 (SVILVMLLGPLLFLACHLFVI) form a helical membrane-spanning segment. At 148-178 (NMNEIVRTKEFEGNMTWKIKLKSAMYFSNMT) the chain is on the extracellular side. N161 and N176 each carry an N-linked (GlcNAc...) asparagine glycan. A helical membrane pass occupies residues 179-199 (VTMVANLVPFTLTLLSFMLLI). Residues 200–229 (CSLCKHLKKMQLHGKGSQDPSTKVHIKALQ) are Cytoplasmic-facing. Residues 230–250 (TVISFLLLCAIYFLSIMISVW) form a helical membrane-spanning segment. Residues 251 to 259 (SFGSLENKP) are Extracellular-facing. The chain crosses the membrane as a helical span at residues 260–280 (VFMFCKAIRFSYPSIHPFILI). The Cytoplasmic segment spans residues 281 to 309 (WGNKKLKQTFLSVFWQMRYWVKGEKTSSP).

It belongs to the G-protein coupled receptor T2R family. Expressed in subsets of taste receptor cells of the tongue and exclusively in gustducin-positive cells. Expressed in airway epithelia.

It localises to the membrane. The protein resides in the cell projection. The protein localises to the cilium membrane. Its function is as follows. Gustducin-coupled receptor immplicated in the perception of bitter compounds in the oral cavity and the gastrointestinal tract. Signals through PLCB2 and the calcium-regulated cation channel TRPM5. Activated by the sulfonyl amide sweeteners saccharin and acesulfame K. In airway epithelial cells, binding of bitter compounds increases the intracellular calcium ion concentration and stimulates ciliary beat frequency. May act as chemosensory receptors in airway epithelial cells to detect and eliminate potential noxious agents from the airways. The chain is Taste receptor type 2 member 43 (TAS2R43) from Homo sapiens (Human).